The chain runs to 424 residues: CinA-like protein (424 aa).

It belongs to the CinA family.

The chain is CinA-like protein from Nostoc sp. (strain PCC 7120 / SAG 25.82 / UTEX 2576).